Reading from the N-terminus, the 233-residue chain is Mediator of RNA polymerase II transcription subunit 7 (233 aa).

K185 is covalently cross-linked (Glycyl lysine isopeptide (Lys-Gly) (interchain with G-Cter in SUMO1); alternate). K185 participates in a covalent cross-link: Glycyl lysine isopeptide (Lys-Gly) (interchain with G-Cter in SUMO2); alternate. A disordered region spans residues 187–213; it reads EPMDADDSNNCTGQNEHQRENSGHRRD. Phosphoserine is present on S194. The span at 202–213 shows a compositional bias: basic and acidic residues; it reads EHQRENSGHRRD.

The protein belongs to the Mediator complex subunit 7 family. In terms of assembly, component of the Mediator complex, which is composed of MED1, MED4, MED6, MED7, MED8, MED9, MED10, MED11, MED12, MED13, MED13L, MED14, MED15, MED16, MED17, MED18, MED19, MED20, MED21, MED22, MED23, MED24, MED25, MED26, MED27, MED29, MED30, MED31, CCNC, CDK8 and CDC2L6/CDK11. The MED12, MED13, CCNC and CDK8 subunits form a distinct module termed the CDK8 module. Mediator containing the CDK8 module is less active than Mediator lacking this module in supporting transcriptional activation. Individual preparations of the Mediator complex lacking one or more distinct subunits have been variously termed ARC, CRSP, DRIP, PC2, SMCC and TRAP. In terms of processing, constitutively sumoylated.

It is found in the nucleus. Its function is as follows. Component of the Mediator complex, a coactivator involved in the regulated transcription of nearly all RNA polymerase II-dependent genes. Mediator functions as a bridge to convey information from gene-specific regulatory proteins to the basal RNA polymerase II transcription machinery. Mediator is recruited to promoters by direct interactions with regulatory proteins and serves as a scaffold for the assembly of a functional preinitiation complex with RNA polymerase II and the general transcription factors. The polypeptide is Mediator of RNA polymerase II transcription subunit 7 (MED7) (Homo sapiens (Human)).